We begin with the raw amino-acid sequence, 225 residues long: UPF0758 protein XOO0462 (225 aa).

The MPN domain maps to 102 to 224 (ALSDPPSVGR…PVSLAERGWL (123 aa)). Zn(2+) contacts are provided by H173, H175, and D186. The JAMM motif signature appears at 173-186 (HNHPSGNPEPSEAD).

The protein belongs to the UPF0758 family.

This is UPF0758 protein XOO0462 from Xanthomonas oryzae pv. oryzae (strain MAFF 311018).